Consider the following 214-residue polypeptide: ATP phosphoribosyltransferase (214 aa).

Belongs to the ATP phosphoribosyltransferase family. Short subfamily. As to quaternary structure, heteromultimer composed of HisG and HisZ subunits.

Its subcellular location is the cytoplasm. The catalysed reaction is 1-(5-phospho-beta-D-ribosyl)-ATP + diphosphate = 5-phospho-alpha-D-ribose 1-diphosphate + ATP. It participates in amino-acid biosynthesis; L-histidine biosynthesis; L-histidine from 5-phospho-alpha-D-ribose 1-diphosphate: step 1/9. Catalyzes the condensation of ATP and 5-phosphoribose 1-diphosphate to form N'-(5'-phosphoribosyl)-ATP (PR-ATP). Has a crucial role in the pathway because the rate of histidine biosynthesis seems to be controlled primarily by regulation of HisG enzymatic activity. This is ATP phosphoribosyltransferase from Alcanivorax borkumensis (strain ATCC 700651 / DSM 11573 / NCIMB 13689 / SK2).